The sequence spans 338 residues: uncharacterized protein (338 aa).

An N-terminal signal peptide occupies residues Met1–Ala29.

The protein belongs to the aerolysin family.

This is an uncharacterized protein from Staphylococcus aureus (strain USA300).